The chain runs to 421 residues: UDP-N-acetylglucosamine 1-carboxyvinyltransferase (421 aa).

Residue 22-23 (KN) coordinates phosphoenolpyruvate. Arg-93 contributes to the UDP-N-acetyl-alpha-D-glucosamine binding site. Cys-117 functions as the Proton donor in the catalytic mechanism. Cys-117 bears the 2-(S-cysteinyl)pyruvic acid O-phosphothioketal mark. UDP-N-acetyl-alpha-D-glucosamine is bound by residues 122 to 126 (RPVDL), Asp-308, and Val-330.

This sequence belongs to the EPSP synthase family. MurA subfamily.

Its subcellular location is the cytoplasm. It catalyses the reaction phosphoenolpyruvate + UDP-N-acetyl-alpha-D-glucosamine = UDP-N-acetyl-3-O-(1-carboxyvinyl)-alpha-D-glucosamine + phosphate. The protein operates within cell wall biogenesis; peptidoglycan biosynthesis. Its function is as follows. Cell wall formation. Adds enolpyruvyl to UDP-N-acetylglucosamine. This Pseudomonas paraeruginosa (strain DSM 24068 / PA7) (Pseudomonas aeruginosa (strain PA7)) protein is UDP-N-acetylglucosamine 1-carboxyvinyltransferase.